The chain runs to 515 residues: Fatty acyl-CoA reductase 1 (515 aa).

Over 1-465 (MVSIPEYYEG…ARKHLNKLRN (465 aa)) the chain is Cytoplasmic. Residues 451–507 (SGLPAARKHLNKLRNIRYGFNTILVILIWRIFIARSQMARNIWYFVVSLCYKFLSYF) form a necessary and sufficient for PEX19-mediated localization into peroxisome membrane region. A helical transmembrane segment spans residues 466-483 (IRYGFNTILVILIWRIFI). The Peroxisomal segment spans residues 484 to 515 (ARSQMARNIWYFVVSLCYKFLSYFRASSTMRY).

The protein belongs to the fatty acyl-CoA reductase family. Interacts with PEX19; PEX19 mediates the targeting of FAR1 to peroxisomes.

It is found in the peroxisome membrane. The enzyme catalyses a long-chain fatty acyl-CoA + 2 NADPH + 2 H(+) = a long-chain primary fatty alcohol + 2 NADP(+) + CoA. It catalyses the reaction hexadecanoyl-CoA + 2 NADPH + 2 H(+) = hexadecan-1-ol + 2 NADP(+) + CoA. It carries out the reaction octadecanoyl-CoA + 2 NADPH + 2 H(+) = octadecan-1-ol + 2 NADP(+) + CoA. The catalysed reaction is (9Z)-octadecenoyl-CoA + 2 NADPH + 2 H(+) = (9Z)-octadecen-1-ol + 2 NADP(+) + CoA. The enzyme catalyses (9Z,12Z)-octadecadienoyl-CoA + 2 NADPH + 2 H(+) = (9Z,12Z)-octadecadien-1-ol + 2 NADP(+) + CoA. It catalyses the reaction eicosanoyl-CoA + 2 NADPH + 2 H(+) = eicosan-1-ol + 2 NADP(+) + CoA. It carries out the reaction 16-methylheptadecanoyl-CoA + 2 NADPH + 2 H(+) = 16-methylheptadecan-1-ol + 2 NADP(+) + CoA. The catalysed reaction is 18-methylnonadecanoyl-CoA + 2 NADPH + 2 H(+) = 18-methylnonadecan-1-ol + 2 NADP(+) + CoA. Its function is as follows. Catalyzes the reduction of saturated and unsaturated C16 or C18 fatty acyl-CoA to fatty alcohols. It plays an essential role in the production of ether lipids/plasmalogens which synthesis requires fatty alcohols. In parallel, it is also required for wax monoesters production since fatty alcohols also constitute a substrate for their synthesis. The protein is Fatty acyl-CoA reductase 1 of Pongo abelii (Sumatran orangutan).